A 201-amino-acid chain; its full sequence is MKKIKKIIQIGMIGGLAAVAGGALAGCGSNNDNADTLNQAANAQGAFVIIEETAPGQYKIKDQYPSDETRVVLKDLNGTERILSKEEMDALIKEEAAKIDNGTSNLTKDNGQISSGGLSLGETLLASAAGAILGSWIGSKLFNNQNFANQQRGAFSNQSAYQRSVNSFNKAGTTSSASSAKKSGFFGGGSKATSSSSSFGS.

The first 26 residues, 1–26 (MKKIKKIIQIGMIGGLAAVAGGALAG), serve as a signal peptide directing secretion. Residue C27 is the site of N-palmitoyl cysteine attachment. C27 is lipidated: S-diacylglycerol cysteine. The tract at residues 169–201 (NKAGTTSSASSAKKSGFFGGGSKATSSSSSFGS) is disordered. Low complexity-rich tracts occupy residues 170 to 184 (KAGT…KKSG) and 191 to 201 (KATSSSSSFGS).

Belongs to the UPF0323 family.

Its subcellular location is the cell membrane. The protein is UPF0323 lipoprotein Cj0371 of Campylobacter jejuni subsp. jejuni serotype O:2 (strain ATCC 700819 / NCTC 11168).